We begin with the raw amino-acid sequence, 911 residues long: Epithelial discoidin domain-containing receptor 1 (911 aa).

An N-terminal signal peptide occupies residues 1–19 (MGTGTLSSLLLLLLLVTIG). Residues 22–415 (DMKGHFDPAK…VAKAEGSPTA (394 aa)) lie on the Extracellular side of the membrane. The 155-residue stretch at 32–186 (CRYALGMQDR…VCLRVELYGC (155 aa)) folds into the F5/8 type C domain. 2 disulfide bridges follow: C32–C186 and C75–C178. Residues 193-369 (LSYTAPVGQT…LFSEISFISD (177 aa)) are DS-like domain. N213, Q232, D235, V237, Y255, and Y257 together coordinate Ca(2+). The N-linked (GlcNAc...) asparagine glycan is linked to N213. N-linked (GlcNAc...) asparagine glycosylation is present at N262. A disulfide bridge connects residues C305 and C350. Ca(2+)-binding residues include S362 and E363. 2 N-linked (GlcNAc...) asparagine glycosylation sites follow: N372 and N392. The helical transmembrane segment at 416-436 (ILIGCLVAIILLLLLIIALML) threads the bilayer. Residues 437–911 (WRLHWRRLLS…FLADDALNTV (475 aa)) are Cytoplasmic-facing. Positions 468–496 (ILINNRPGPREPPPYQEPRPRGTPPHSAP) are disordered. Pro residues predominate over residues 477 to 494 (REPPPYQEPRPRGTPPHS). Residues 479–482 (PPPY) carry the PPxY motif motif. Phosphotyrosine; by autocatalysis occurs at positions 482, 511, and 518. The 296-residue stretch at 608–903 (LRFKEKLGEG…PPFAQLHRFL (296 aa)) folds into the Protein kinase domain. ATP-binding positions include 614–622 (LGEGQFGEV) and K653. Phosphotyrosine; by autocatalysis is present on Y738. The active-site Proton acceptor is D764. Y790, Y794, and Y795 each carry phosphotyrosine; by autocatalysis.

It belongs to the protein kinase superfamily. Tyr protein kinase family. Insulin receptor subfamily. Homodimer. Interacts (via PPxY motif) with WWC1 (via WW domains) in a collagen-regulated manner. Forms a tripartite complex with WWC1 and PRKCZ, but predominantly in the absence of collagen. Interacts (tyrosine phosphorylated) with SHC1. Interacts with SRC. Interacts with MYH9. Interacts with CDH1. Interacts with PTPN11. Interacts with NCK2. In terms of processing, autophosphorylated in response to fibrillar collagen binding. In terms of tissue distribution, detected in the cochlea and the organ of Corti in the inner ear. Isoform 1 is predominant and is expressed in developing embryo and adult brain. Isoform 2 is expressed in various epithelial cells.

The protein localises to the cell membrane. The enzyme catalyses L-tyrosyl-[protein] + ATP = O-phospho-L-tyrosyl-[protein] + ADP + H(+). Its function is as follows. Tyrosine kinase that functions as a cell surface receptor for fibrillar collagen and regulates cell attachment to the extracellular matrix, remodeling of the extracellular matrix, cell migration, differentiation, survival and cell proliferation. Collagen binding triggers a signaling pathway that involves SRC and leads to the activation of MAP kinases. Regulates remodeling of the extracellular matrix by up-regulation of the matrix metalloproteinases MMP2, MMP7 and MMP9, and thereby facilitates cell migration and wound healing, but also tumor cell invasion. Promotes smooth muscle cell migration, and thereby contributes to arterial wound healing. Phosphorylates PTPN11. Required for normal blastocyst implantation during pregnancy, for normal mammary gland differentiation and normal lactation. Required for normal ear morphology and normal hearing. The polypeptide is Epithelial discoidin domain-containing receptor 1 (Ddr1) (Mus musculus (Mouse)).